Here is a 361-residue protein sequence, read N- to C-terminus: Peptide chain release factor 1 (361 aa).

Gln-236 is modified (N5-methylglutamine). Over residues 285–309 (NAKDSARAADRKAQVGSGDRSERIR) the composition is skewed to basic and acidic residues. Positions 285–312 (NAKDSARAADRKAQVGSGDRSERIRTYN) are disordered.

The protein belongs to the prokaryotic/mitochondrial release factor family. Methylated by PrmC. Methylation increases the termination efficiency of RF1.

Its subcellular location is the cytoplasm. In terms of biological role, peptide chain release factor 1 directs the termination of translation in response to the peptide chain termination codons UAG and UAA. In Methylobacterium radiotolerans (strain ATCC 27329 / DSM 1819 / JCM 2831 / NBRC 15690 / NCIMB 10815 / 0-1), this protein is Peptide chain release factor 1.